Reading from the N-terminus, the 611-residue chain is Protein KINASE OF THE OUTER CHLOROPLAST MEMBRANE 1 (611 aa).

The Cytoplasmic segment spans residues M1–P555. One can recognise a Protein kinase domain in the interval L39 to L306. Residues I45 to V53 and K74 contribute to the ATP site. Residues L556–V572 traverse the membrane as a helical segment. Residues R573–F611 are Chloroplast intermembrane-facing. The segment at S579 to K606 is disordered. Residues K595–K606 show a composition bias toward basic and acidic residues.

It belongs to the protein kinase superfamily. Ser/Thr protein kinase family. As to quaternary structure, associates with the TOC complex containing, at least, translocons at the chloroplast envelope (e.g. TOCs and TICs such as TOC159, TOC75, TOC33 and TIC56).

It is found in the plastid. The protein localises to the chloroplast outer membrane. The enzyme catalyses L-seryl-[protein] + ATP = O-phospho-L-seryl-[protein] + ADP + H(+). It catalyses the reaction L-threonyl-[protein] + ATP = O-phospho-L-threonyl-[protein] + ADP + H(+). In terms of biological role, serine/threonine protein kinase acting as a regulatory component of the plastid protein import machinery by phosphorylating import receptors (e.g. the A-domain of TOC159, TOC120 and TOC132). Supports preprotein import and contributes to efficient chloroplast biogenesis, thus being required for survival during de-etiolation. This Arabidopsis thaliana (Mouse-ear cress) protein is Protein KINASE OF THE OUTER CHLOROPLAST MEMBRANE 1.